We begin with the raw amino-acid sequence, 431 residues long: SPI-1 type 3 secretion system ATPase (431 aa).

Residue 162–167 participates in ATP binding; the sequence is GCGKTM.

This sequence belongs to the ATPase alpha/beta chains family. T3SS ATPase subfamily. In terms of assembly, the core secretion machinery of the T3SS is composed of approximately 20 different proteins, including cytoplasmic components, a base, an export apparatus and a needle. This subunit is part of the cytosolic complex. Forms homohexamers.

It is found in the cytoplasm. It carries out the reaction ATP + H2O + cellular proteinSide 1 = ADP + phosphate + cellular proteinSide 2.. ATPase component of the type III secretion system (T3SS), also called injectisome, which is used to inject bacterial effector proteins into eukaryotic host cells. Acts as a molecular motor to provide the energy that is required for the export of proteins. Required for type III secretion apparatus (T3SA) formation, proper protein secretion, host cell invasion and virulence. May play a critical role in T3SS substrate recognition, disassembly of the effector/chaperone complex and unfolding of the effector in an ATP-dependent manner prior to secretion. In Salmonella typhi, this protein is SPI-1 type 3 secretion system ATPase.